The following is a 159-amino-acid chain: Cytochrome P450 monooxygenase aunB (159 aa).

Heme is bound at residue Cys134.

It belongs to the cytochrome P450 family. It depends on heme as a cofactor.

The catalysed reaction is 2 fonsecin B + NADPH + O2 + H(+) = aurasperone B + NADP(+) + 2 H2O. The enzyme catalyses 2 rubrofusarin B + NADPH + O2 + H(+) = aurasperone A + NADP(+) + 2 H2O. Its pathway is secondary metabolite biosynthesis. Its function is as follows. Cytochrome P450 monooxygenase; part of the gene cluster that mediates the biosynthesis of aurasperone B, a dimeric gamma-naphthopyrone. The first step in the biosynthesis of aurasperone B is the production of gamma-naphthopyrone precursor YWA1 by the non-reducing polyketide synthase albA, via condensation of one acetyl-CoA starter unit with 6 malonyl-CoA units. YWA1 is then methylated by aunE at position C-6 to yield foncesin which is further methylated at position C-8 by aunD to produce fonsecin B. A key enzyme in the biosynthetic pathway is the cytochrome P450 monooxygenase aunB which catalyzes the oxidative dimerization of fonsecin B to aurasperone B. AunB also catalyzes the oxidative dimerization of rubrofusarin B into aurasperone A. The protein is Cytochrome P450 monooxygenase aunB of Aspergillus niger (strain ATCC 1015 / CBS 113.46 / FGSC A1144 / LSHB Ac4 / NCTC 3858a / NRRL 328 / USDA 3528.7).